Consider the following 222-residue polypeptide: MVLISATRDFRERTKSKLVKIMIWAGIVVITFAIAVRIYPIFIFLLKERIKPLVEALYDKLPWIWEVSLSRYWDRLIDFLDRYLWACAQRIQTGIRKQKGEFVVTFSCRVKKRLYARAIEVGIHLSLLSNLFWILKTTLAVGYRLLWVLYYIISFEGFLGSFRLYLVYFGFYCLLFSGKWLRTSEDRGERQAQISGILLRGMLIECAFSVLCLEEDSNLHAL.

This sequence belongs to the ycf73 family.

It localises to the plastid. Its subcellular location is the chloroplast. This is an uncharacterized protein from Oryza nivara (Indian wild rice).